The primary structure comprises 405 residues: Tryptophan synthase beta chain (405 aa).

Residue Lys-98 is modified to N6-(pyridoxal phosphate)lysine.

This sequence belongs to the TrpB family. As to quaternary structure, tetramer of two alpha and two beta chains. Requires pyridoxal 5'-phosphate as cofactor.

It carries out the reaction (1S,2R)-1-C-(indol-3-yl)glycerol 3-phosphate + L-serine = D-glyceraldehyde 3-phosphate + L-tryptophan + H2O. It functions in the pathway amino-acid biosynthesis; L-tryptophan biosynthesis; L-tryptophan from chorismate: step 5/5. Functionally, the beta subunit is responsible for the synthesis of L-tryptophan from indole and L-serine. The sequence is that of Tryptophan synthase beta chain from Afipia carboxidovorans (strain ATCC 49405 / DSM 1227 / KCTC 32145 / OM5) (Oligotropha carboxidovorans).